A 33-amino-acid polypeptide reads, in one-letter code: Mu/delta-theraphotoxin-Pm2a (33 aa).

3 disulfide bridges follow: C2–C16, C9–C21, and C15–C27. Phenylalanine amide is present on F33.

As to expression, expressed by the venom gland.

It localises to the secreted. Gating-modifier toxin with very weak activity on Nav1.7/SCN9A and Nav1.8/SCN10A. Shows 22% peak current inhibition (at 10 uM) on Nav1.8/SCN10A sodium channels. Show peak current inhibition and delays fast inactivation on Nav1.7/SCN9A (EC(50)&gt;10 uM). This chain is Mu/delta-theraphotoxin-Pm2a, found in Poecilotheria metallica (Metallic blue ornamental tree spider).